A 147-amino-acid chain; its full sequence is Hemoglobin subunit delta (147 aa).

Residues 3–147 (HLTPEEKAAV…VATALAHKYH (145 aa)) enclose the Globin domain. His-64 and His-93 together coordinate heme b.

The protein belongs to the globin family. In terms of assembly, heterotetramer of two delta chains and two alpha chains. In terms of tissue distribution, red blood cells.

This is Hemoglobin subunit delta (HBD) from Ateles geoffroyi (Black-handed spider monkey).